A 194-amino-acid polypeptide reads, in one-letter code: Nucleoside triphosphate pyrophosphatase (194 aa).

The active-site Proton acceptor is the aspartate 71.

It belongs to the Maf family. A divalent metal cation is required as a cofactor.

Its subcellular location is the cytoplasm. It carries out the reaction a ribonucleoside 5'-triphosphate + H2O = a ribonucleoside 5'-phosphate + diphosphate + H(+). It catalyses the reaction a 2'-deoxyribonucleoside 5'-triphosphate + H2O = a 2'-deoxyribonucleoside 5'-phosphate + diphosphate + H(+). In terms of biological role, nucleoside triphosphate pyrophosphatase. May have a dual role in cell division arrest and in preventing the incorporation of modified nucleotides into cellular nucleic acids. This chain is Nucleoside triphosphate pyrophosphatase, found in Paramagnetospirillum magneticum (strain ATCC 700264 / AMB-1) (Magnetospirillum magneticum).